The following is a 117-amino-acid chain: Large ribosomal subunit protein bL19 (117 aa).

It belongs to the bacterial ribosomal protein bL19 family.

This protein is located at the 30S-50S ribosomal subunit interface and may play a role in the structure and function of the aminoacyl-tRNA binding site. The polypeptide is Large ribosomal subunit protein bL19 (Kineococcus radiotolerans (strain ATCC BAA-149 / DSM 14245 / SRS30216)).